The following is a 381-amino-acid chain: Homoserine O-succinyltransferase (381 aa).

Residues 45–360 (NAVLVCHALN…PHGHDAFLLD (316 aa)) form the AB hydrolase-1 domain. The active-site Nucleophile is serine 151. A substrate-binding site is contributed by arginine 221. Catalysis depends on residues aspartate 321 and histidine 354. Aspartate 355 provides a ligand contact to substrate.

The protein belongs to the AB hydrolase superfamily. MetX family. As to quaternary structure, homodimer.

It localises to the cytoplasm. The catalysed reaction is L-homoserine + succinyl-CoA = O-succinyl-L-homoserine + CoA. Its pathway is amino-acid biosynthesis; L-methionine biosynthesis via de novo pathway; O-succinyl-L-homoserine from L-homoserine: step 1/1. In terms of biological role, transfers a succinyl group from succinyl-CoA to L-homoserine, forming succinyl-L-homoserine. This chain is Homoserine O-succinyltransferase, found in Burkholderia lata (strain ATCC 17760 / DSM 23089 / LMG 22485 / NCIMB 9086 / R18194 / 383).